Here is a 177-residue protein sequence, read N- to C-terminus: Bifunctional protein PyrR (177 aa).

The short motif at 98 to 110 is the PRPP-binding element; that stretch reads IILVDDVIYTGRT.

It belongs to the purine/pyrimidine phosphoribosyltransferase family. PyrR subfamily. In terms of assembly, homodimer and homohexamer; in equilibrium.

It catalyses the reaction UMP + diphosphate = 5-phospho-alpha-D-ribose 1-diphosphate + uracil. Its function is as follows. Regulates transcriptional attenuation of the pyrimidine nucleotide (pyr) operon by binding in a uridine-dependent manner to specific sites on pyr mRNA. This disrupts an antiterminator hairpin in the RNA and favors formation of a downstream transcription terminator, leading to a reduced expression of downstream genes. Also displays a weak uracil phosphoribosyltransferase activity which is not physiologically significant. In Clostridium kluyveri (strain ATCC 8527 / DSM 555 / NBRC 12016 / NCIMB 10680 / K1), this protein is Bifunctional protein PyrR.